Reading from the N-terminus, the 1381-residue chain is DNA-directed RNA polymerase subunit beta (1381 aa).

This sequence belongs to the RNA polymerase beta chain family. In terms of assembly, the RNAP catalytic core consists of 2 alpha, 1 beta, 1 beta' and 1 omega subunit. When a sigma factor is associated with the core the holoenzyme is formed, which can initiate transcription.

The catalysed reaction is RNA(n) + a ribonucleoside 5'-triphosphate = RNA(n+1) + diphosphate. Its function is as follows. DNA-dependent RNA polymerase catalyzes the transcription of DNA into RNA using the four ribonucleoside triphosphates as substrates. The chain is DNA-directed RNA polymerase subunit beta from Halorhodospira halophila (strain DSM 244 / SL1) (Ectothiorhodospira halophila (strain DSM 244 / SL1)).